Reading from the N-terminus, the 208-residue chain is Uracil phosphoribosyltransferase (208 aa).

5-phospho-alpha-D-ribose 1-diphosphate contacts are provided by residues Arg-78, Arg-103, and 130–138 (DPMLATGGT). Uracil is bound by residues Ile-193 and 198–200 (GDA). Asp-199 is a binding site for 5-phospho-alpha-D-ribose 1-diphosphate.

The protein belongs to the UPRTase family. Mg(2+) serves as cofactor.

The catalysed reaction is UMP + diphosphate = 5-phospho-alpha-D-ribose 1-diphosphate + uracil. It participates in pyrimidine metabolism; UMP biosynthesis via salvage pathway; UMP from uracil: step 1/1. Its activity is regulated as follows. Allosterically activated by GTP. Its function is as follows. Catalyzes the conversion of uracil and 5-phospho-alpha-D-ribose 1-diphosphate (PRPP) to UMP and diphosphate. The sequence is that of Uracil phosphoribosyltransferase from Solidesulfovibrio magneticus (strain ATCC 700980 / DSM 13731 / RS-1) (Desulfovibrio magneticus).